A 251-amino-acid chain; its full sequence is ATP synthase subunit a (251 aa).

A run of 6 helical transmembrane segments spans residues 30–50 (NSNE…VVAL), 86–106 (FFPF…LGLF), 116–136 (IAIT…VGFW), 145–165 (FFSP…IEIV), 195–215 (FMLM…IIPL), and 219–239 (IALT…FAIL).

Belongs to the ATPase A chain family. In terms of assembly, F-type ATPases have 2 components, CF(1) - the catalytic core - and CF(0) - the membrane proton channel. CF(1) has five subunits: alpha(3), beta(3), gamma(1), delta(1), epsilon(1). CF(0) has three main subunits: a(1), b(2) and c(9-12). The alpha and beta chains form an alternating ring which encloses part of the gamma chain. CF(1) is attached to CF(0) by a central stalk formed by the gamma and epsilon chains, while a peripheral stalk is formed by the delta and b chains.

The protein resides in the cell inner membrane. In terms of biological role, key component of the proton channel; it plays a direct role in the translocation of protons across the membrane. The protein is ATP synthase subunit a of Acidiphilium cryptum (strain JF-5).